A 189-amino-acid chain; its full sequence is Elongation factor P (189 aa).

It belongs to the elongation factor P family.

It is found in the cytoplasm. It participates in protein biosynthesis; polypeptide chain elongation. Involved in peptide bond synthesis. Stimulates efficient translation and peptide-bond synthesis on native or reconstituted 70S ribosomes in vitro. Probably functions indirectly by altering the affinity of the ribosome for aminoacyl-tRNA, thus increasing their reactivity as acceptors for peptidyl transferase. In Pseudomonas syringae pv. tomato (strain ATCC BAA-871 / DC3000), this protein is Elongation factor P.